Here is a 538-residue protein sequence, read N- to C-terminus: Succinyl-CoA:acetate CoA-transferase (538 aa).

305–309 contacts CoA; the sequence is GVGSV. Glu330 functions as the 5-glutamyl coenzyme A thioester intermediate in the catalytic mechanism. Positions 420 and 424 each coordinate CoA.

This sequence belongs to the acetyl-CoA hydrolase/transferase family.

It carries out the reaction succinyl-CoA + acetate = succinate + acetyl-CoA. Forms succinyl-CoA from succinate and acetyl-CoA. In Clostridium kluyveri (strain ATCC 8527 / DSM 555 / NBRC 12016 / NCIMB 10680 / K1), this protein is Succinyl-CoA:acetate CoA-transferase.